The primary structure comprises 750 residues: Probable methylmalonyl-CoA mutase large subunit (750 aa).

(R)-methylmalonyl-CoA is bound by residues Y91, M94, T101, R103, Y105, and S130. Cob(II)alamin contacts are provided by F133 and A155. Positions 211 and 213 each coordinate (R)-methylmalonyl-CoA. Positions 222 and 223 each coordinate cob(II)alamin. R223, H260, R299, and S301 together coordinate (R)-methylmalonyl-CoA. Residues G349, E386, A389, G628, H629, D630, R631, S674, L676, G705, and T728 each coordinate cob(II)alamin. A B12-binding domain is found at 616–748; sequence RPRILIAKMG…HRLAERLGYT (133 aa).

It belongs to the methylmalonyl-CoA mutase family. As to quaternary structure, heterodimer of an alpha and a beta chain. The cofactor is adenosylcob(III)alamin.

It carries out the reaction (R)-methylmalonyl-CoA = succinyl-CoA. The protein operates within metabolic intermediate metabolism; propanoyl-CoA degradation; succinyl-CoA from propanoyl-CoA: step 3/3. Catalyzes the isomerization of succinyl-CoA to methylmalonyl-CoA during synthesis of propionate from tricarboxylic acid-cycle intermediates. This is Probable methylmalonyl-CoA mutase large subunit (mutB) from Mycobacterium bovis (strain ATCC BAA-935 / AF2122/97).